The sequence spans 302 residues: Nucleotide-binding protein Bcep1808_2900 (302 aa).

Position 8–15 (8–15 (GISGSGKS)) interacts with ATP. 57–60 (DARS) is a binding site for GTP.

The protein belongs to the RapZ-like family.

In terms of biological role, displays ATPase and GTPase activities. In Burkholderia vietnamiensis (strain G4 / LMG 22486) (Burkholderia cepacia (strain R1808)), this protein is Nucleotide-binding protein Bcep1808_2900.